The primary structure comprises 364 residues: Aminomethyltransferase (364 aa).

The protein belongs to the GcvT family. The glycine cleavage system is composed of four proteins: P, T, L and H.

The enzyme catalyses N(6)-[(R)-S(8)-aminomethyldihydrolipoyl]-L-lysyl-[protein] + (6S)-5,6,7,8-tetrahydrofolate = N(6)-[(R)-dihydrolipoyl]-L-lysyl-[protein] + (6R)-5,10-methylene-5,6,7,8-tetrahydrofolate + NH4(+). In terms of biological role, the glycine cleavage system catalyzes the degradation of glycine. In Escherichia coli O157:H7, this protein is Aminomethyltransferase.